The following is a 98-amino-acid chain: SPbeta prophage-derived uncharacterized protein YorB (98 aa).

In Bacillus subtilis (strain 168), this protein is SPbeta prophage-derived uncharacterized protein YorB (yorB).